The following is a 185-amino-acid chain: Ribosome-recycling factor (185 aa).

The protein belongs to the RRF family.

Its subcellular location is the cytoplasm. Its function is as follows. Responsible for the release of ribosomes from messenger RNA at the termination of protein biosynthesis. May increase the efficiency of translation by recycling ribosomes from one round of translation to another. The chain is Ribosome-recycling factor from Neorickettsia sennetsu (strain ATCC VR-367 / Miyayama) (Ehrlichia sennetsu).